A 285-amino-acid polypeptide reads, in one-letter code: Pantothenate synthetase (285 aa).

ATP is bound at residue 33–40 (MGALHEGH). Residue His-40 is the Proton donor of the active site. Gln-64 is a binding site for (R)-pantoate. Gln-64 lines the beta-alanine pocket. 150–153 (GEKD) lines the ATP pocket. Gln-156 contributes to the (R)-pantoate binding site. Residues Ala-179 and 187–190 (LSSR) contribute to the ATP site.

The protein belongs to the pantothenate synthetase family. As to quaternary structure, homodimer.

It localises to the cytoplasm. The enzyme catalyses (R)-pantoate + beta-alanine + ATP = (R)-pantothenate + AMP + diphosphate + H(+). It participates in cofactor biosynthesis; (R)-pantothenate biosynthesis; (R)-pantothenate from (R)-pantoate and beta-alanine: step 1/1. Catalyzes the condensation of pantoate with beta-alanine in an ATP-dependent reaction via a pantoyl-adenylate intermediate. The sequence is that of Pantothenate synthetase from Caulobacter vibrioides (strain ATCC 19089 / CIP 103742 / CB 15) (Caulobacter crescentus).